Here is a 413-residue protein sequence, read N- to C-terminus: N-acylneuraminate cytidylyltransferase (413 aa).

It belongs to the CMP-NeuNAc synthase family. Mg(2+) serves as cofactor. Requires Mn(2+) as cofactor.

It localises to the cytoplasm. It catalyses the reaction an N-acylneuraminate + CTP = a CMP-N-acyl-beta-neuraminate + diphosphate. Functionally, catalyzes the formation of CMP-N-acetylneuraminic acid (CMP-NeuNAc), which is essential for the formation of the capsule. The polypeptide is N-acylneuraminate cytidylyltransferase (neuA) (Streptococcus agalactiae serotype V (strain ATCC BAA-611 / 2603 V/R)).